The sequence spans 131 residues: Glycine cleavage system H protein (131 aa).

The 83-residue stretch at 24–106 (RAIVGVSDHA…YGEGWIMVIE (83 aa)) folds into the Lipoyl-binding domain. Lys65 carries the post-translational modification N6-lipoyllysine.

It belongs to the GcvH family. In terms of assembly, the glycine cleavage system is composed of four proteins: P, T, L and H. The cofactor is (R)-lipoate.

The glycine cleavage system catalyzes the degradation of glycine. The H protein shuttles the methylamine group of glycine from the P protein to the T protein. In Xylella fastidiosa (strain Temecula1 / ATCC 700964), this protein is Glycine cleavage system H protein.